Reading from the N-terminus, the 721-residue chain is MIIKNQLIFVNFYVILIIWWFVMGILDKIQKKSEKIEKEKKSETVIPSDTKLKPIEPHPTINKKATVGNDETILDTYSIKIDEIEMEVVIKREEGYIYYLVPEIDKINMSLSKLTKDHLNHIKSQISDLGLIEYDQIREYLTNFSMRYNLAIPYIDSLAKFFYLVIGRLGLLEVPLNDDRLEEVMVNGYNVPVFVFHRKHQMCETNIVLDRNEVDRIIESIANLVNRPIDSRVPMLDAFLPDGSRVNATTADITMNGATLTIRKFSKNPLTVIDLINFGTLDIDTAAFLWQAVEGYFGAKPANTLIAGGTGSGKTTLLNVLSLFSMYNERIITIEDTPELQIPHKHVIKMVTRPARPGMPEYEVTMDDLIKNALRMRPDRIFVGEVRGKEAHSLLVAMNTGHDGALAYDEPIYLSDGNIINIGEFVDKFFKKYKNSIKKEDNGFGWIDIGNENIYIKSFNKLSLIIEDKRILRVWRKKYSGKLIKITTKNRREITLTHDHPVYISKTGEVLEINAEMVKVGDYIYIPKNNTINLDEVIKVETVDYNGHIYDLTVEDNHTYIAGKNEGFAVSNCSGTLHANSADEAILRLTSPPMNVPKIMLTALNFIINQQRIRRAGKTIRRILGIVEIVKGGGEGHEFAKTTLYEYNGLKDSLERRGICMWEEEVCEIAGITKEELLRDRENRKKVLSYLYKNNIRKLENVSDYIMRYQVDPEKLLRSIR.

The helical transmembrane segment at 6–26 (QLIFVNFYVILIIWWFVMGIL) threads the bilayer. ATP is bound at residue 308–315 (GGTGSGKT).

The protein belongs to the GSP E family. In terms of processing, this protein undergoes a protein self splicing that involves a post-translational excision of the intervening region (intein) followed by peptide ligation.

The protein localises to the membrane. This is an uncharacterized protein from Methanocaldococcus jannaschii (strain ATCC 43067 / DSM 2661 / JAL-1 / JCM 10045 / NBRC 100440) (Methanococcus jannaschii).